Here is a 54-residue protein sequence, read N- to C-terminus: Large ribosomal subunit protein bL33B (54 aa).

The protein belongs to the bacterial ribosomal protein bL33 family.

The chain is Large ribosomal subunit protein bL33B from Mycobacterium sp. (strain JLS).